The chain runs to 926 residues: Alpha-aminoadipic semialdehyde synthase, mitochondrial (926 aa).

A mitochondrion-targeting transit peptide spans 1–27 (MLRVSRTKLGRLSPSLSRGLHHKAVMA). Residues 28 to 455 (LRREDVNAWE…DAVIASNGML (428 aa)) are lysine-ketoglutarate reductase. Lys-48 and Lys-56 each carry N6-acetyllysine. The residue at position 93 (Lys-93) is an N6-acetyllysine; alternate. Lys-93 bears the N6-succinyllysine; alternate mark. Lys-128 bears the N6-acetyllysine mark. N6-acetyllysine; alternate is present on Lys-138. Lys-138 bears the N6-succinyllysine; alternate mark. An N6-succinyllysine modification is found at Lys-274. At Lys-286 the chain carries N6-acetyllysine; alternate. An N6-succinyllysine; alternate modification is found at Lys-286. At Lys-333 the chain carries N6-succinyllysine. An N6-acetyllysine; alternate modification is found at Lys-458. The residue at position 458 (Lys-458) is an N6-succinyllysine; alternate. The saccharopine dehydrogenase stretch occupies residues 477–926 (MGTKKKVLVL…MYTTQSTIKL (450 aa)). Residues Ser-488, Asp-512, and Gln-516 each contribute to the NAD(+) site. N6-acetyllysine; alternate occurs at positions 523 and 535. Residues Lys-523 and Lys-535 each carry the N6-succinyllysine; alternate modification. Leu-554, Ala-576, and Ser-577 together coordinate NAD(+). 577-578 (SY) is an L-saccharopine binding site. Lys-584 bears the N6-acetyllysine; alternate mark. N6-succinyllysine; alternate is present on Lys-584. NAD(+)-binding residues include Leu-603, Asp-604, and Pro-605. Asp-604 provides a ligand contact to L-saccharopine. An L-saccharopine-binding site is contributed by Arg-703. Lys-707 is subject to N6-acetyllysine. L-saccharopine is bound at residue 724–726 (TLR). Lys-732 is modified (N6-succinyllysine). Residue Lys-739 is modified to N6-acetyllysine. Lys-761 carries the post-translational modification N6-acetyllysine; alternate. Lys-761 is modified (N6-succinyllysine; alternate). N6-acetyllysine is present on Lys-780.

In the N-terminal section; belongs to the AlaDH/PNT family. The protein in the C-terminal section; belongs to the saccharopine dehydrogenase family. As to quaternary structure, homotetramer.

Its subcellular location is the mitochondrion. It carries out the reaction L-saccharopine + NADP(+) + H2O = L-lysine + 2-oxoglutarate + NADPH + H(+). The enzyme catalyses L-saccharopine + NAD(+) + H2O = (S)-2-amino-6-oxohexanoate + L-glutamate + NADH + H(+). The protein operates within amino-acid degradation; L-lysine degradation via saccharopine pathway; glutaryl-CoA from L-lysine: step 1/6. Its pathway is amino-acid degradation; L-lysine degradation via saccharopine pathway; glutaryl-CoA from L-lysine: step 2/6. Its function is as follows. Bifunctional enzyme that catalyzes the first two steps in lysine degradation. The sequence is that of Alpha-aminoadipic semialdehyde synthase, mitochondrial from Bos taurus (Bovine).